The sequence spans 1358 residues: MTYSYTEKKRIRKDFSKLPSVMEVPYLLSIQLDSFRDYLQMETAPEDRRETGLHAAFKSVFPIVSYSGNAALEYVSYRIGEPVFDVKECQLRGVTYAAPLRVKVRLIIYDKESSNKAIKDIKEQEVYMGEMPLMTENGTFVVNGTERVIVSQLHRSPGVFFDHDKGKTHSSGKLLYSARVIPYRGSWLDFEFDPKDAVFVRIDRRRKLPASILLRGLGYTSEQMLEMFFETSKFSLGAEVCKLELVPSRLRGDIATFDIKDNDGNVIVEEGRRITARHIKQLEKAGITELEVPTEYLYGRVLAKDMIDQSTGEVLVECNTELTEEVVTKILDAGVKDIETLYTNDLDCGPFMSDTLRIDPTRTPLEALVEIYRMMRPGEPPTKESAENLFNNLFFSEERYDLSAVGRMKLNRRLGREESTGEGTLTHDDIIDVLKTLIAIRNGQGQVDDIDNLGNRRVRCVGEMAENQFRVGLVRVERAVRERLSLAESEGLMPQDLINAKPVAAAVKEFFGSSQLSQFMDQNNPLSEVTHKRRISALGPGGLTRERAGFEVRDVHPTHYGRVCPIETPEGPNIGLINSLATYARSNSYGFLESPYRKVVDGVVTDEVVYLSAIEESNYVIAQASAATDEGKRLTDELVTVRHQNEFTVAPPEAVNFMDVSPRQVVSVAASLIPFLEHDDANRALMGANMQRQAVPTLKSQVPLVGTGVERTVAQDSGVCVTARRGGVIESVDAARIVVRVNNEETEAGDAGVDIYNLTKYTRSNQNTCINQRSIVRQGDVIARGDVLADGPSVDLGELALGQNMRIAFMPWNGYNFEDSILISEKVVQEDRLTTIHIQELTCVARDTKLGSEEITADIPNVGESALSKLDESGIVYIGAEVGPGDILVGKVTPKGETQLTPEEKLLRAIFGEKASDVKDTSQRVPTGTRGTVIDVQVFTRDGIEKDARALSIEKEQLDKYRKDLKDEYRIVEGATFERLMAALKGQEVISGPGLKKGAKLEEAYLAELPRADWFKLRMKDEALNELLEKSEQGLEDRKKEHEARFDDKKGKLQQGDDLAPGVLKIVKVYLAIKRRIQPGDKMAGRHGNKGVISAVMPIEDMPYDEFGNTVDIVLNPLGVPSRMNVGQVLETHLGAAAKGLGERISRMLDEQRKVAELRKLLDEIYNHSDEVFKVDLDSLTDKEIFELCNNLRGGVPMATPVFDGAKEAEVKRMLELAGLDTTGQTKLYDGRTGDAFDRPVTVGYMYILKLNHLIDDKMHARSTGSYSLVTQQPLGGKAQFGGQRFGEMEVWALEAYGAAYTLQEMLTVKSDDVNGRTKMYKNIVDGDHRMEPGMPESFNVLVKEIRSLGIDIELESE.

Positions 1033–1051 (QGLEDRKKEHEARFDDKKG) are enriched in basic and acidic residues. Residues 1033–1053 (QGLEDRKKEHEARFDDKKGKL) are disordered.

It belongs to the RNA polymerase beta chain family. As to quaternary structure, the RNAP catalytic core consists of 2 alpha, 1 beta, 1 beta' and 1 omega subunit. When a sigma factor is associated with the core the holoenzyme is formed, which can initiate transcription.

The catalysed reaction is RNA(n) + a ribonucleoside 5'-triphosphate = RNA(n+1) + diphosphate. DNA-dependent RNA polymerase catalyzes the transcription of DNA into RNA using the four ribonucleoside triphosphates as substrates. This is DNA-directed RNA polymerase subunit beta from Marinobacter nauticus (strain ATCC 700491 / DSM 11845 / VT8) (Marinobacter aquaeolei).